The primary structure comprises 367 residues: Glutamate 5-kinase 2 (367 aa).

Lysine 10 serves as a coordination point for ATP. Substrate-binding residues include serine 50, aspartate 136, and asparagine 148. ATP is bound by residues threonine 168–aspartate 169 and threonine 210–lysine 216. One can recognise a PUA domain in the interval serine 275–aspartate 353.

This sequence belongs to the glutamate 5-kinase family.

The protein localises to the cytoplasm. It catalyses the reaction L-glutamate + ATP = L-glutamyl 5-phosphate + ADP. Its pathway is amino-acid biosynthesis; L-proline biosynthesis; L-glutamate 5-semialdehyde from L-glutamate: step 1/2. Functionally, catalyzes the transfer of a phosphate group to glutamate to form L-glutamate 5-phosphate. This is Glutamate 5-kinase 2 from Pseudoalteromonas translucida (strain TAC 125).